The sequence spans 197 residues: RING-H2 finger protein ATL80 (197 aa).

The helical transmembrane segment at 30–50 (LVVILAALLCALICVLGLIAV) threads the bilayer. Residues 111-153 (CAICLAEFSAGDELRVLPQCGHGFHVACIDTWLGSHSSCPSCR) form an RING-type; atypical zinc finger. Residues 168 to 197 (PGSSSSGLESEPEIEIRIKQGEDDPNSFLP) are disordered.

This sequence belongs to the RING-type zinc finger family. ATL subfamily.

The protein resides in the membrane. The enzyme catalyses S-ubiquitinyl-[E2 ubiquitin-conjugating enzyme]-L-cysteine + [acceptor protein]-L-lysine = [E2 ubiquitin-conjugating enzyme]-L-cysteine + N(6)-ubiquitinyl-[acceptor protein]-L-lysine.. The protein operates within protein modification; protein ubiquitination. Its function is as follows. May be involved in the early steps of the plant defense signaling pathway. In Arabidopsis thaliana (Mouse-ear cress), this protein is RING-H2 finger protein ATL80 (ATL80).